The primary structure comprises 232 residues: Large ribosomal subunit protein uL1 (232 aa).

This sequence belongs to the universal ribosomal protein uL1 family. In terms of assembly, part of the 50S ribosomal subunit.

Functionally, binds directly to 23S rRNA. The L1 stalk is quite mobile in the ribosome, and is involved in E site tRNA release. Its function is as follows. Protein L1 is also a translational repressor protein, it controls the translation of the L11 operon by binding to its mRNA. The chain is Large ribosomal subunit protein uL1 from Maricaulis maris (strain MCS10) (Caulobacter maris).